The sequence spans 222 residues: Thiol:disulfide interchange protein DsbL (222 aa).

A signal peptide spans 1–27 (MSAKWINSIFKSVVLTAALALPFTASA). The region spanning 28–221 (FTEGTDYMVL…MAQLVRELAT (194 aa)) is the Thioredoxin domain. Cys56 and Cys59 are joined by a disulfide.

This sequence belongs to the thioredoxin family. DsbL subfamily. Interacts with DsbI.

The protein resides in the periplasm. Functionally, involved in disulfide-bond formation. Acts by transferring its disulfide bond to other proteins. Part of a redox system composed of DsbI and DsbL that mediates formation of an essential disulfide bond in AssT. The protein is Thiol:disulfide interchange protein DsbL of Lelliottia amnigena (Enterobacter amnigenus).